Reading from the N-terminus, the 315-residue chain is piRNA biogenesis protein EXD1 (315 aa).

In terms of domain architecture, 3'-5' exonuclease spans 141 to 228; it reads IYIFDIQVMQ…ECLTNYLGLQ (88 aa).

The protein belongs to the EXD1 family. Homodimer. Component of the PET complex, at least composed of EXD1, SIWI, TDRD12 and piRNAs.

It is found in the cytoplasm. In terms of biological role, RNA-binding component of the PET complex, a multiprotein complex required for the processing of piRNAs during spermatogenesis. The piRNA metabolic process mediates the repression of transposable elements during meiosis by forming complexes composed of piRNAs and Piwi proteins and governs the methylation and subsequent repression of transposable elements, preventing their mobilization, which is essential for the germline integrity. The PET complex is required during the secondary piRNAs metabolic process for the PIWIL2 slicing-triggered loading of PIWIL4 piRNAs. In the PET complex, EXD1 probably acts as an RNA adapter. EXD1 is an inactive exonuclease. This is piRNA biogenesis protein EXD1 from Bombyx mori (Silk moth).